A 560-amino-acid chain; its full sequence is Putative transport protein ESA_02488 (560 aa).

Transmembrane regions (helical) follow at residues 8–28, 32–52, 66–86, 91–111, and 158–178; these read LLNGNYILLLFVVLALGLCLG, LGSVQLGNSIGVLVVSLLLGQ, FMLFIFCVGVEAGPNFFSIFF, NYLMLALVMVGSALLIALGLG, and HLSLGYALTYLIGLVSLIFGA. 2 consecutive RCK C-terminal domains span residues 200 to 288 and 292 to 373; these read RGLD…SFRN and VFDR…RIGF. 5 helical membrane-spanning segments follow: residues 383-403, 406-426, 447-467, 475-495, and 539-559; these read LLAFCAFFIVGLMIGMITFQF, FSFGIGNAAGLLFAGIMLGFL, FGLMVFMAGVGLSAGSGIGHG, MLFAGLIVSLLPVVICFLFGA, and YAIANVLLTLAGTLIVIIWPG.

The protein belongs to the AAE transporter (TC 2.A.81) family. YbjL subfamily.

The protein localises to the cell membrane. In Cronobacter sakazakii (strain ATCC BAA-894) (Enterobacter sakazakii), this protein is Putative transport protein ESA_02488.